The sequence spans 316 residues: Lipoyl synthase (316 aa).

Residues 1–19 (MRDLKIPEQRHPEKAHRPD) show a composition bias toward basic and acidic residues. The interval 1–31 (MRDLKIPEQRHPEKAHRPDNAQPKKPSWIRV) is disordered. C55, C60, C66, C81, C85, C88, and S295 together coordinate [4Fe-4S] cluster. The region spanning 67–284 (WSQGHATMMI…EKAAYGKGFL (218 aa)) is the Radical SAM core domain.

Belongs to the radical SAM superfamily. Lipoyl synthase family. It depends on [4Fe-4S] cluster as a cofactor.

Its subcellular location is the cytoplasm. The enzyme catalyses [[Fe-S] cluster scaffold protein carrying a second [4Fe-4S](2+) cluster] + N(6)-octanoyl-L-lysyl-[protein] + 2 oxidized [2Fe-2S]-[ferredoxin] + 2 S-adenosyl-L-methionine + 4 H(+) = [[Fe-S] cluster scaffold protein] + N(6)-[(R)-dihydrolipoyl]-L-lysyl-[protein] + 4 Fe(3+) + 2 hydrogen sulfide + 2 5'-deoxyadenosine + 2 L-methionine + 2 reduced [2Fe-2S]-[ferredoxin]. It functions in the pathway protein modification; protein lipoylation via endogenous pathway; protein N(6)-(lipoyl)lysine from octanoyl-[acyl-carrier-protein]: step 2/2. Catalyzes the radical-mediated insertion of two sulfur atoms into the C-6 and C-8 positions of the octanoyl moiety bound to the lipoyl domains of lipoate-dependent enzymes, thereby converting the octanoylated domains into lipoylated derivatives. The protein is Lipoyl synthase of Ruegeria sp. (strain TM1040) (Silicibacter sp.).